Reading from the N-terminus, the 61-residue chain is Opistoporin-4 (61 aa).

Residues 45 to 61 (EAGQMPFDEFMDILHYY) constitute a propeptide that is removed on maturation.

This sequence belongs to the non-disulfide-bridged peptide (NDBP) superfamily. Long chain multifunctional peptide (group 2) family. Expressed by the venom gland.

It is found in the secreted. It localises to the target cell membrane. In terms of biological role, at high concentrations, acts as a pore former in cellular membranes and causes the leakage of the cells. At submicromolar concentrations, degranulates granulocytes and has a weak hemolytic activity against human erythrocytes. Also strongly inhibits the production of superoxide anions. Has a strong antibacterial activity against Gram-negative bacteria but is less active against Gram-positive bacteria. Also has antifungal activity. In Opistophthalmus carinatus (African yellow leg scorpion), this protein is Opistoporin-4.